Here is a 415-residue protein sequence, read N- to C-terminus: MQVYAVGGAIRDELLGKPSQDRDYVVVGATPADMEAAGYKPVGKDFPVFLHPRTKEEYALARTERKTAMGYKGFAFYCEPDVTLDDDLVRRDLTINAMARAVDDDGKLVGPVIDPHGGQRDLAARQFRHVSEAFAEDPVRILRVARFAARFHDFTVAPETVALMRRMVDAGEVDALVPERVWQELARGLMEARPARMFEVLRQCGALARLLPELDRLWGVPQRADYHPEVDTGVHVMMVIDCAAAMGTTLAVRFAALVHDLGKGTTPEHVLPRHLGHETRSVELLEDVCKRLRVPNDCRDLAVVVAREHGNIHRSMEFGAAAITRLLERCDALRKPGRFADALLACEADKRGRKGFESDTYPQKARLLAALDAAASVDAGAIAKALADDVSKIRERVHEARVAAVDARLKQLADH.

Positions 8 and 11 each coordinate ATP. Positions 8 and 11 each coordinate CTP. D21 and D23 together coordinate Mg(2+). Residues R91, R143, and R146 each coordinate ATP. Residues R91, R143, and R146 each contribute to the CTP site. Positions 232–333 constitute an HD domain; that stretch reads TGVHVMMVID…TRLLERCDAL (102 aa).

The protein belongs to the tRNA nucleotidyltransferase/poly(A) polymerase family. Bacterial CCA-adding enzyme type 1 subfamily. Monomer. Can also form homodimers and oligomers. Mg(2+) serves as cofactor. The cofactor is Ni(2+).

It carries out the reaction a tRNA precursor + 2 CTP + ATP = a tRNA with a 3' CCA end + 3 diphosphate. It catalyses the reaction a tRNA with a 3' CCA end + 2 CTP + ATP = a tRNA with a 3' CCACCA end + 3 diphosphate. In terms of biological role, catalyzes the addition and repair of the essential 3'-terminal CCA sequence in tRNAs without using a nucleic acid template. Adds these three nucleotides in the order of C, C, and A to the tRNA nucleotide-73, using CTP and ATP as substrates and producing inorganic pyrophosphate. tRNA 3'-terminal CCA addition is required both for tRNA processing and repair. Also involved in tRNA surveillance by mediating tandem CCA addition to generate a CCACCA at the 3' terminus of unstable tRNAs. While stable tRNAs receive only 3'-terminal CCA, unstable tRNAs are marked with CCACCA and rapidly degraded. This chain is Multifunctional CCA protein, found in Cupriavidus pinatubonensis (strain JMP 134 / LMG 1197) (Cupriavidus necator (strain JMP 134)).